The chain runs to 616 residues: Chaperone protein HscA (616 aa).

Belongs to the heat shock protein 70 family.

Its function is as follows. Chaperone involved in the maturation of iron-sulfur cluster-containing proteins. Has a low intrinsic ATPase activity which is markedly stimulated by HscB. Involved in the maturation of IscU. This Proteus mirabilis (strain HI4320) protein is Chaperone protein HscA.